The following is a 416-amino-acid chain: Serine hydroxymethyltransferase (416 aa).

Residues L121 and 125-127 contribute to the (6S)-5,6,7,8-tetrahydrofolate site; that span reads GHL. K229 bears the N6-(pyridoxal phosphate)lysine mark.

This sequence belongs to the SHMT family. Homodimer. The cofactor is pyridoxal 5'-phosphate.

It localises to the cytoplasm. It carries out the reaction (6R)-5,10-methylene-5,6,7,8-tetrahydrofolate + glycine + H2O = (6S)-5,6,7,8-tetrahydrofolate + L-serine. It participates in one-carbon metabolism; tetrahydrofolate interconversion. The protein operates within amino-acid biosynthesis; glycine biosynthesis; glycine from L-serine: step 1/1. Catalyzes the reversible interconversion of serine and glycine with tetrahydrofolate (THF) serving as the one-carbon carrier. This reaction serves as the major source of one-carbon groups required for the biosynthesis of purines, thymidylate, methionine, and other important biomolecules. Also exhibits THF-independent aldolase activity toward beta-hydroxyamino acids, producing glycine and aldehydes, via a retro-aldol mechanism. In Neisseria gonorrhoeae, this protein is Serine hydroxymethyltransferase.